We begin with the raw amino-acid sequence, 244 residues long: Protein DCG1 (244 aa).

It belongs to the HyuE racemase family.

The polypeptide is Protein DCG1 (DCG1) (Saccharomyces cerevisiae (strain ATCC 204508 / S288c) (Baker's yeast)).